The following is a 101-amino-acid chain: NAD(P)H-quinone oxidoreductase subunit 4L, chloroplastic (101 aa).

3 helical membrane-spanning segments follow: residues Tyr2–Leu22, Met32–Ile52, and Val61–Val81.

The protein belongs to the complex I subunit 4L family. In terms of assembly, NDH is composed of at least 16 different subunits, 5 of which are encoded in the nucleus.

Its subcellular location is the plastid. The protein localises to the chloroplast thylakoid membrane. It carries out the reaction a plastoquinone + NADH + (n+1) H(+)(in) = a plastoquinol + NAD(+) + n H(+)(out). The catalysed reaction is a plastoquinone + NADPH + (n+1) H(+)(in) = a plastoquinol + NADP(+) + n H(+)(out). Functionally, NDH shuttles electrons from NAD(P)H:plastoquinone, via FMN and iron-sulfur (Fe-S) centers, to quinones in the photosynthetic chain and possibly in a chloroplast respiratory chain. The immediate electron acceptor for the enzyme in this species is believed to be plastoquinone. Couples the redox reaction to proton translocation, and thus conserves the redox energy in a proton gradient. The sequence is that of NAD(P)H-quinone oxidoreductase subunit 4L, chloroplastic from Mesostigma viride (Green alga).